A 182-amino-acid chain; its full sequence is UPF0149 protein HI_0817 (182 aa).

Belongs to the UPF0149 family.

The protein is UPF0149 protein HI_0817 of Haemophilus influenzae (strain ATCC 51907 / DSM 11121 / KW20 / Rd).